The following is a 693-amino-acid chain: Polyribonucleotide nucleotidyltransferase (693 aa).

The Mg(2+) site is built by aspartate 485 and aspartate 491. In terms of domain architecture, KH spans 552 to 611; sequence PRIETMQINTSKIATVIGPGGKQIRQIIERSGAQVDINDNGLINISANTQESIDKAKELI. An S1 motif domain is found at 621–689; sequence GKIYNGRVTS…EKGQLKLSHK (69 aa).

The protein belongs to the polyribonucleotide nucleotidyltransferase family. Mg(2+) is required as a cofactor.

Its subcellular location is the cytoplasm. The enzyme catalyses RNA(n+1) + phosphate = RNA(n) + a ribonucleoside 5'-diphosphate. Functionally, involved in mRNA degradation. Catalyzes the phosphorolysis of single-stranded polyribonucleotides processively in the 3'- to 5'-direction. This chain is Polyribonucleotide nucleotidyltransferase, found in Chlamydia muridarum (strain MoPn / Nigg).